A 522-amino-acid polypeptide reads, in one-letter code: Cell polarity protein mod5 (522 aa).

5 disordered regions span residues Met-1–Asp-83, Lys-119–Asn-158, Arg-170–Ala-192, Pro-251–Pro-285, and Tyr-300–Lys-516. Polar residues-rich tracts occupy residues Pro-27 to Ser-46, Leu-66 to Ser-76, and Asn-131 to Glu-146. The residue at position 43 (Ser-43) is a Phosphoserine. Over residues Pro-258–Pro-285 the composition is skewed to low complexity. Ser-303 is modified (phosphoserine). The span at Lys-308 to Lys-318 shows a compositional bias: basic and acidic residues. Positions Gly-335 to Asp-349 are enriched in polar residues. Ser-350 carries the post-translational modification Phosphoserine. 2 stretches are compositionally biased toward polar residues: residues Asn-363–Asn-396 and Asp-404–Val-431. A compositionally biased stretch (low complexity) spans Ser-439–Leu-452. 2 stretches are compositionally biased toward basic and acidic residues: residues His-472–Arg-482 and Pro-495–Lys-516.

In terms of assembly, interacts with tea1 and tea3.

The protein localises to the cell membrane. In terms of biological role, with tea1, acts in a positive-feedback loop in the microtubule-mediated regulation of cell polarity. Involved in the anchoring of tea1 at the cortex as well as the correct localization of tea3. In Schizosaccharomyces pombe (strain 972 / ATCC 24843) (Fission yeast), this protein is Cell polarity protein mod5 (mod5).